Consider the following 109-residue polypeptide: Small ribosomal subunit protein bS6 (109 aa).

Belongs to the bacterial ribosomal protein bS6 family.

Its function is as follows. Binds together with bS18 to 16S ribosomal RNA. This Anaplasma phagocytophilum (strain HZ) protein is Small ribosomal subunit protein bS6.